A 366-amino-acid polypeptide reads, in one-letter code: MSGNTYGKLFTVTTFGESHGAALGCIVDGCPPGLELSEQDIQIDLDRRKPGQSRYTTQRREDDQVKILSGVFEGKTTGTPIGMLIENTDQRSKDYSNIKDQFRPAHADYTYMQKYGVRDYRGGGRSSARETAMRVAAGAIAKKYLKDFHGIEVRGYLSQLGPVKIETVDWDQVDQNPFFCPDASKVPAMEEFMKTLNKEGDSIGAKITVVATGVPPGLGEPIFDRLDAEIAHALMSINAVKGVEIGEGFAVVEQRGSKHRDEITPEGFLSNNAGGILGGISSGQDIIANIALKPTSSLHIPGRSVDVHGNPVEVVTKGRHDPCVGIRATPIAEAMLALVLMDHLLRHRGQNGGVQHRIPVIPASAK.

Residues R48 and R54 each contribute to the NADP(+) site. FMN contacts are provided by residues R125–S127, N238–A239, G278, K293–S297, and R319.

The protein belongs to the chorismate synthase family. Homotetramer. FMNH2 is required as a cofactor.

The catalysed reaction is 5-O-(1-carboxyvinyl)-3-phosphoshikimate = chorismate + phosphate. It functions in the pathway metabolic intermediate biosynthesis; chorismate biosynthesis; chorismate from D-erythrose 4-phosphate and phosphoenolpyruvate: step 7/7. Its function is as follows. Catalyzes the anti-1,4-elimination of the C-3 phosphate and the C-6 proR hydrogen from 5-enolpyruvylshikimate-3-phosphate (EPSP) to yield chorismate, which is the branch point compound that serves as the starting substrate for the three terminal pathways of aromatic amino acid biosynthesis. This reaction introduces a second double bond into the aromatic ring system. The sequence is that of Chorismate synthase from Cellvibrio japonicus (strain Ueda107) (Pseudomonas fluorescens subsp. cellulosa).